The following is a 236-amino-acid chain: 7-cyano-7-deazaguanine synthase (236 aa).

Residue 7–17 coordinates ATP; the sequence is CSGGLDSVSLA. Residues cysteine 185, cysteine 193, cysteine 196, and cysteine 199 each contribute to the Zn(2+) site.

The protein belongs to the QueC family. It depends on Zn(2+) as a cofactor.

The catalysed reaction is 7-carboxy-7-deazaguanine + NH4(+) + ATP = 7-cyano-7-deazaguanine + ADP + phosphate + H2O + H(+). The protein operates within purine metabolism; 7-cyano-7-deazaguanine biosynthesis. Its function is as follows. Catalyzes the ATP-dependent conversion of 7-carboxy-7-deazaguanine (CDG) to 7-cyano-7-deazaguanine (preQ(0)). The sequence is that of 7-cyano-7-deazaguanine synthase from Sinorhizobium fredii (strain NBRC 101917 / NGR234).